The chain runs to 249 residues: 2-C-methyl-D-erythritol 4-phosphate cytidylyltransferase (249 aa).

It belongs to the IspD/TarI cytidylyltransferase family. IspD subfamily.

The catalysed reaction is 2-C-methyl-D-erythritol 4-phosphate + CTP + H(+) = 4-CDP-2-C-methyl-D-erythritol + diphosphate. It functions in the pathway isoprenoid biosynthesis; isopentenyl diphosphate biosynthesis via DXP pathway; isopentenyl diphosphate from 1-deoxy-D-xylulose 5-phosphate: step 2/6. Its function is as follows. Catalyzes the formation of 4-diphosphocytidyl-2-C-methyl-D-erythritol from CTP and 2-C-methyl-D-erythritol 4-phosphate (MEP). This chain is 2-C-methyl-D-erythritol 4-phosphate cytidylyltransferase, found in Chromohalobacter salexigens (strain ATCC BAA-138 / DSM 3043 / CIP 106854 / NCIMB 13768 / 1H11).